Reading from the N-terminus, the 316-residue chain is ATP synthase gamma chain (316 aa).

Belongs to the ATPase gamma chain family. F-type ATPases have 2 components, CF(1) - the catalytic core - and CF(0) - the membrane proton channel. CF(1) has five subunits: alpha(3), beta(3), gamma(1), delta(1), epsilon(1). CF(0) has three main subunits: a, b and c.

It is found in the cellular thylakoid membrane. Produces ATP from ADP in the presence of a proton gradient across the membrane. The gamma chain is believed to be important in regulating ATPase activity and the flow of protons through the CF(0) complex. In Prochlorococcus marinus (strain SARG / CCMP1375 / SS120), this protein is ATP synthase gamma chain.